Reading from the N-terminus, the 151-residue chain is Protein A151R (151 aa).

The protein belongs to the asfivirus A151R family. In terms of assembly, monomer. Homodimer. Interacts with protein B119L. Interacts with membrane protein E248R. Requires Zn(2+) as cofactor.

In terms of biological role, may participate in a redox cascade for the formation of disulfide bonds in viral proteins. This chain is Protein A151R, found in Ornithodoros (relapsing fever ticks).